A 54-amino-acid chain; its full sequence is Large ribosomal subunit protein bL33 (54 aa).

The protein belongs to the bacterial ribosomal protein bL33 family.

In Thermus thermophilus (strain ATCC BAA-163 / DSM 7039 / HB27), this protein is Large ribosomal subunit protein bL33.